We begin with the raw amino-acid sequence, 68 residues long: Small ribosomal subunit protein bS21 (68 aa).

The protein belongs to the bacterial ribosomal protein bS21 family.

This is Small ribosomal subunit protein bS21 from Jannaschia sp. (strain CCS1).